The chain runs to 289 residues: ATP synthase gamma chain (289 aa).

It belongs to the ATPase gamma chain family. F-type ATPases have 2 components, CF(1) - the catalytic core - and CF(0) - the membrane proton channel. CF(1) has five subunits: alpha(3), beta(3), gamma(1), delta(1), epsilon(1). CF(0) has three main subunits: a, b and c.

It localises to the cell inner membrane. In terms of biological role, produces ATP from ADP in the presence of a proton gradient across the membrane. The gamma chain is believed to be important in regulating ATPase activity and the flow of protons through the CF(0) complex. This Azorhizobium caulinodans (strain ATCC 43989 / DSM 5975 / JCM 20966 / LMG 6465 / NBRC 14845 / NCIMB 13405 / ORS 571) protein is ATP synthase gamma chain.